A 294-amino-acid polypeptide reads, in one-letter code: Glycine--tRNA ligase alpha subunit (294 aa).

It belongs to the class-II aminoacyl-tRNA synthetase family. In terms of assembly, tetramer of two alpha and two beta subunits.

Its subcellular location is the cytoplasm. The enzyme catalyses tRNA(Gly) + glycine + ATP = glycyl-tRNA(Gly) + AMP + diphosphate. This chain is Glycine--tRNA ligase alpha subunit, found in Polynucleobacter asymbioticus (strain DSM 18221 / CIP 109841 / QLW-P1DMWA-1) (Polynucleobacter necessarius subsp. asymbioticus).